The chain runs to 189 residues: Chitin synthase 1 (189 aa).

The protein belongs to the chitin synthase family. Class I subfamily.

The protein localises to the cell membrane. The catalysed reaction is [(1-&gt;4)-N-acetyl-beta-D-glucosaminyl](n) + UDP-N-acetyl-alpha-D-glucosamine = [(1-&gt;4)-N-acetyl-beta-D-glucosaminyl](n+1) + UDP + H(+). Functionally, polymerizes chitin, a structural polymer of the cell wall and septum, by transferring the sugar moiety of UDP-GlcNAc to the non-reducing end of the growing chitin polymer. This is Chitin synthase 1 (chs1) from Botryotinia fuckeliana (Noble rot fungus).